A 234-amino-acid polypeptide reads, in one-letter code: MEVYEGKAKKMIPMDDDKFIMEFKDDATAFDGVKKAKFKGKGWLNAQISAKFFKLLEEHGIKTHFIGVAGDNKLIVEKLDMYPLEVVVRNVVAGSLKKRLPLPEGYELPEPIVELYYKSDELHDPMINYYHAKILGITLEEIKKMEEIALKVNEILKDYLAKRGIILVDFKLEFGKNKNGEIILADEISPDTCRFWDAETKKSLDKDVFRFDKGDLIEAYEELYRRITGEDPGN.

The protein belongs to the SAICAR synthetase family.

It carries out the reaction 5-amino-1-(5-phospho-D-ribosyl)imidazole-4-carboxylate + L-aspartate + ATP = (2S)-2-[5-amino-1-(5-phospho-beta-D-ribosyl)imidazole-4-carboxamido]succinate + ADP + phosphate + 2 H(+). The protein operates within purine metabolism; IMP biosynthesis via de novo pathway; 5-amino-1-(5-phospho-D-ribosyl)imidazole-4-carboxamide from 5-amino-1-(5-phospho-D-ribosyl)imidazole-4-carboxylate: step 1/2. The polypeptide is Phosphoribosylaminoimidazole-succinocarboxamide synthase (purC) (Pyrococcus abyssi (strain GE5 / Orsay)).